A 34-amino-acid chain; its full sequence is Delta-theraphotoxin-Hm1b (34 aa).

Disulfide bonds link Cys-2/Cys-16, Cys-9/Cys-21, and Cys-15/Cys-28. Phe-34 bears the Phenylalanine amide mark.

It belongs to the neurotoxin 10 (Hwtx-1) family. 09 (HaTx) subfamily. In terms of tissue distribution, expressed by the venom gland.

The protein localises to the secreted. Its function is as follows. Gating-modifier toxin that potently and selectively acts on Nav1.1/SCN1A and Nav1.3/SCN3A. It enhances hNav1.1/SCN1A currents and delays fast inactivation of the channel (EC(50)=11.6 nM), leading to a sustained current. Similar effects are observed at Nav1.3/SCN3A (EC(50)=11.8 nM), but with less sustained currents. When tested on Nav1.2/SCN2A, the native toxin decreases the peak current by 50% at saturating concentration, whereas the recombinant toxin only shows a weak decrease of peak current. The native toxin specifically activates the voltage-gated sodium channel Nav1.1/SCN1A in somatosensory neurons to elicit acute pain and mechanical allodynia. When tested on Nav1.1/SCN1A, the toxin induces a hyperpolarising shift of the voltage-dependence of steady-state activation, and induces a depolarizing shift in the voltage dependence of inactivation. In addition, it does not modify the recovery from fast inactivation in Nav1.1/SCN1A. The toxin hydrophobic face probably interacts with the domain IV voltage-sensor of Nav1.1/SCN1A and Nav1.3/SCN3A and may trap the voltage-sensing S4 helix in a partially activated state. In vivo, intracerebroventricular injection into mice elicits convulsions, spasms, tremors and rapid death. When injected into mouse hindpaw, the toxin elicits an immediate and robust response to pain. However, intraplantar injection of toxin does not cause neurogenic inflammation or alter sensitivity to heat, indicative of a modality-specific effect on mechanosensitive neurons. The protein is Delta-theraphotoxin-Hm1b of Heteroscodra maculata (Togo starburst tarantula).